The following is a 93-amino-acid chain: MAQLLSDVEIQSQASKLSGWTLEGSKLQTTRKFKDFIEAIAFVNKLVEPAESAGHHPDIEISYNKVKVTLTTHDAGGLTQKDFDVAATISQIN.

This sequence belongs to the pterin-4-alpha-carbinolamine dehydratase family.

The catalysed reaction is (4aS,6R)-4a-hydroxy-L-erythro-5,6,7,8-tetrahydrobiopterin = (6R)-L-erythro-6,7-dihydrobiopterin + H2O. The sequence is that of Putative pterin-4-alpha-carbinolamine dehydratase from Nostoc sp. (strain PCC 7120 / SAG 25.82 / UTEX 2576).